Consider the following 154-residue polypeptide: Putative peroxiredoxin MT1643 (154 aa).

A Thioredoxin domain is found at 1–153; it reads MKTGDTVADF…ALATLRAIRS (153 aa). The active-site Cysteine sulfenic acid (-SOH) intermediate is the Cys-44. A disulfide bridge links Cys-44 with Cys-49.

The protein belongs to the peroxiredoxin family. BCP/PrxQ subfamily. In terms of assembly, monomer.

The enzyme catalyses a hydroperoxide + [thioredoxin]-dithiol = an alcohol + [thioredoxin]-disulfide + H2O. In terms of biological role, thiol-specific peroxidase that catalyzes the reduction of hydrogen peroxide and organic hydroperoxides to water and alcohols, respectively. Plays a role in cell protection against oxidative stress by detoxifying peroxides and as sensor of hydrogen peroxide-mediated signaling events. The polypeptide is Putative peroxiredoxin MT1643 (bcpB) (Mycobacterium tuberculosis (strain CDC 1551 / Oshkosh)).